The primary structure comprises 29 residues: Protamine-like protein (29 aa).

The interval 1–29 (MRSFDQGSTRAPARERCRRQRPEGRSAQR) is disordered. The segment covering 12–29 (PARERCRRQRPEGRSAQR) has biased composition (basic and acidic residues).

The polypeptide is Protamine-like protein (tpr) (Escherichia coli (strain K12)).